Here is a 141-residue protein sequence, read N- to C-terminus: Transcriptional regulator MraZ (141 aa).

SpoVT-AbrB domains follow at residues 5 to 47 and 76 to 119; these read TFNL…KPAD and ANLV…DKVQ.

This sequence belongs to the MraZ family. As to quaternary structure, forms oligomers.

The protein resides in the cytoplasm. The protein localises to the nucleoid. The protein is Transcriptional regulator MraZ of Mycoplasma genitalium (strain ATCC 33530 / DSM 19775 / NCTC 10195 / G37) (Mycoplasmoides genitalium).